The sequence spans 256 residues: 1-(5-phosphoribosyl)-5-[(5-phosphoribosylamino)methylideneamino] imidazole-4-carboxamide isomerase (256 aa).

Aspartate 8 acts as the Proton acceptor in catalysis. Aspartate 129 (proton donor) is an active-site residue.

This sequence belongs to the HisA/HisF family.

Its subcellular location is the cytoplasm. The enzyme catalyses 1-(5-phospho-beta-D-ribosyl)-5-[(5-phospho-beta-D-ribosylamino)methylideneamino]imidazole-4-carboxamide = 5-[(5-phospho-1-deoxy-D-ribulos-1-ylimino)methylamino]-1-(5-phospho-beta-D-ribosyl)imidazole-4-carboxamide. It participates in amino-acid biosynthesis; L-histidine biosynthesis; L-histidine from 5-phospho-alpha-D-ribose 1-diphosphate: step 4/9. This is 1-(5-phosphoribosyl)-5-[(5-phosphoribosylamino)methylideneamino] imidazole-4-carboxamide isomerase from Prochlorococcus marinus (strain NATL2A).